Consider the following 393-residue polypeptide: G protein-activated inward rectifier potassium channel 3 (393 aa).

Residues 1–23 (MAQENAAFSPGSEEPPRRRGRQR) form a disordered region. The Cytoplasmic portion of the chain corresponds to 1 to 57 (MAQENAAFSPGSEEPPRRRGRQRYVEKDGRCNVQQGNVRETYRYLTDLFTTLVDLQW). A helical transmembrane segment spans residues 58–82 (RLSLLFFVLAYALTWLFFGAIWWLI). Topologically, residues 83–106 (AYGRGDLEHLEDTAWTPCVNNLNG) are extracellular. An intramembrane region (helical; Pore-forming) is located at residues 107-118 (FVAAFLFSIETE). The segment at residues 119–125 (TTIGYGH) is an intramembrane region (pore-forming). Residues 120-125 (TIGYGH) carry the Selectivity filter motif. At 126–134 (RVITDQCPE) the chain is on the extracellular side. The chain crosses the membrane as a helical span at residues 135–156 (GIVLLLLQAILGSMVNAFMVGC). The Cytoplasmic portion of the chain corresponds to 157-393 (MFVKISQPNK…LPPPESESKV (237 aa)). The tract at residues 360 to 393 (KVEEEGAGEGAGAGDGADKEQNGCLPPPESESKV) is disordered. A compositionally biased stretch (pro residues) spans 384–393 (LPPPESESKV). Positions 390-393 (ESKV) match the PDZ-binding motif.

This sequence belongs to the inward rectifier-type potassium channel (TC 1.A.2.1) family. KCNJ9 subfamily. Associates with KCNJ3/GIRK1 to form a G-protein-activated heteromultimer pore-forming unit. Interacts (via PDZ-binding motif) with SNX27 (via PDZ domain); the interaction is required when endocytosed to prevent degradation in lysosomes and promote recycling to the plasma membrane.

It localises to the membrane. The catalysed reaction is K(+)(in) = K(+)(out). In terms of biological role, this receptor is controlled by G proteins. Inward rectifier potassium channels are characterized by a greater tendency to allow potassium to flow into the cell rather than out of it. Their voltage dependence is regulated by the concentration of extracellular potassium; as external potassium is raised, the voltage range of the channel opening shifts to more positive voltages. The inward rectification is mainly due to the blockage of outward current by internal magnesium. Unable to produce channel activity when expressed alone but forms a functional channel in association with KCNJ3/GIRK1. This Rattus norvegicus (Rat) protein is G protein-activated inward rectifier potassium channel 3 (Kcnj9).